The sequence spans 267 residues: Ribosomal RNA small subunit methyltransferase A (267 aa).

The S-adenosyl-L-methionine site is built by N18, L20, G45, E66, D91, and N112.

The protein belongs to the class I-like SAM-binding methyltransferase superfamily. rRNA adenine N(6)-methyltransferase family. RsmA subfamily.

Its subcellular location is the cytoplasm. It carries out the reaction adenosine(1518)/adenosine(1519) in 16S rRNA + 4 S-adenosyl-L-methionine = N(6)-dimethyladenosine(1518)/N(6)-dimethyladenosine(1519) in 16S rRNA + 4 S-adenosyl-L-homocysteine + 4 H(+). Specifically dimethylates two adjacent adenosines (A1518 and A1519) in the loop of a conserved hairpin near the 3'-end of 16S rRNA in the 30S particle. May play a critical role in biogenesis of 30S subunits. The chain is Ribosomal RNA small subunit methyltransferase A from Shewanella sediminis (strain HAW-EB3).